The primary structure comprises 636 residues: DNA-directed RNA polymerase subunit beta' (636 aa).

Zn(2+)-binding residues include cysteine 70, cysteine 72, cysteine 85, and cysteine 88. Mg(2+) is bound by residues aspartate 471, aspartate 473, and aspartate 475.

It belongs to the RNA polymerase beta' chain family. RpoC1 subfamily. It depends on Mg(2+) as a cofactor. The cofactor is Zn(2+).

It is found in the plastid. Its subcellular location is the cyanelle. The catalysed reaction is RNA(n) + a ribonucleoside 5'-triphosphate = RNA(n+1) + diphosphate. In terms of biological role, DNA-dependent RNA polymerase catalyzes the transcription of DNA into RNA using the four ribonucleoside triphosphates as substrates. This chain is DNA-directed RNA polymerase subunit beta', found in Cyanophora paradoxa.